Consider the following 214-residue polypeptide: Probable GTP-binding protein EngB (214 aa).

One can recognise an EngB-type G domain in the interval 22 to 194 (NLPEIAFAGR…WARIDALLSP (173 aa)). Residues 30–37 (GRSNVGKS), 57–61 (GRTQL), 75–78 (DLPG), 142–145 (TKCD), and 173–175 (FSA) contribute to the GTP site. Positions 37 and 59 each coordinate Mg(2+).

Belongs to the TRAFAC class TrmE-Era-EngA-EngB-Septin-like GTPase superfamily. EngB GTPase family. Requires Mg(2+) as cofactor.

Functionally, necessary for normal cell division and for the maintenance of normal septation. This Citrifermentans bemidjiense (strain ATCC BAA-1014 / DSM 16622 / JCM 12645 / Bem) (Geobacter bemidjiensis) protein is Probable GTP-binding protein EngB.